The following is a 147-amino-acid chain: Protein-export protein SecB (147 aa).

The protein belongs to the SecB family. Homotetramer, a dimer of dimers. One homotetramer interacts with 1 SecA dimer.

The protein resides in the cytoplasm. Functionally, one of the proteins required for the normal export of preproteins out of the cell cytoplasm. It is a molecular chaperone that binds to a subset of precursor proteins, maintaining them in a translocation-competent state. It also specifically binds to its receptor SecA. In Neisseria gonorrhoeae (strain ATCC 700825 / FA 1090), this protein is Protein-export protein SecB.